We begin with the raw amino-acid sequence, 120 residues long: Flagellar protein FliT (120 aa).

The segment at 1 to 50 (MNDSSLSLKKWHALSALSNTMLSLAQSGKWDELIEQEVAYVSLVEKISIT) is required for homodimerization. The tract at residues 59 to 97 (IQDQAMVMLNNVLQNEMTLKTLLQERMDELHGLMAQTGK) is fliD binding.

This sequence belongs to the FliT family. As to quaternary structure, homodimer. Interacts with FliD and FlhC.

It localises to the cytoplasm. It is found in the cytosol. Dual-function protein that regulates the transcription of class 2 flagellar operons and that also acts as an export chaperone for the filament-capping protein FliD. As a transcriptional regulator, acts as an anti-FlhDC factor; it directly binds FlhC, thus inhibiting the binding of the FlhC/FlhD complex to class 2 promoters, resulting in decreased expression of class 2 flagellar operons. As a chaperone, effects FliD transition to the membrane by preventing its premature polymerization, and by directing it to the export apparatus. This chain is Flagellar protein FliT, found in Enterobacter sp. (strain 638).